The chain runs to 943 residues: Glycine dehydrogenase (decarboxylating) (943 aa).

Lys-695 bears the N6-(pyridoxal phosphate)lysine mark.

The protein belongs to the GcvP family. The glycine cleavage system is composed of four proteins: P, T, L and H. The cofactor is pyridoxal 5'-phosphate.

It catalyses the reaction N(6)-[(R)-lipoyl]-L-lysyl-[glycine-cleavage complex H protein] + glycine + H(+) = N(6)-[(R)-S(8)-aminomethyldihydrolipoyl]-L-lysyl-[glycine-cleavage complex H protein] + CO2. In terms of biological role, the glycine cleavage system catalyzes the degradation of glycine. The P protein binds the alpha-amino group of glycine through its pyridoxal phosphate cofactor; CO(2) is released and the remaining methylamine moiety is then transferred to the lipoamide cofactor of the H protein. This Jannaschia sp. (strain CCS1) protein is Glycine dehydrogenase (decarboxylating).